Consider the following 184-residue polypeptide: Photosystem I assembly protein Ycf4 (184 aa).

2 helical membrane-spanning segments follow: residues Asn21–Tyr43 and Leu58–Leu80.

The protein belongs to the Ycf4 family.

The protein localises to the plastid. It is found in the chloroplast thylakoid membrane. Its function is as follows. Seems to be required for the assembly of the photosystem I complex. The polypeptide is Photosystem I assembly protein Ycf4 (Marchantia polymorpha (Common liverwort)).